Reading from the N-terminus, the 589-residue chain is PTS system mannitol-specific EIICB component (589 aa).

At 1-25 (MEEKVSLKVRVQKLGTSLSNMVMPN) the chain is on the cytoplasmic side. One can recognise a PTS EIIC type-2 domain in the interval 14 to 347 (LGTSLSNMVM…LHADKSTEDS (334 aa)). A helical transmembrane segment spans residues 26–47 (IGAFIAWGVLTALFIADGYLPN). The Extracellular segment spans residues 48–51 (EQLA). A helical membrane pass occupies residues 52–72 (TVVGPMLTYLLPILIGYTGGY). Residues 73-135 (MIHGQRGAVV…PGFEMLVNNF (63 aa)) lie on the Cytoplasmic side of the membrane. Residues 136 to 157 (SAGLVGFALLLLAFYAIGPVVS) traverse the membrane as a helical segment. The Extracellular portion of the chain corresponds to 158-166 (TLTGAVGNG). A helical transmembrane segment spans residues 167 to 187 (VEAIVNARLLPMANIIIEPAK). Topologically, residues 188–274 (VLFLNNALNH…VMMKPTLFLA (87 aa)) are cytoplasmic. Residues 275-294 (AMAGGISGTFTFQLLDAGLK) traverse the membrane as a helical segment. Residues 295 to 316 (SPASPGSIIAIIATAPKGVWPH) are Extracellular-facing. The helical transmembrane segment at 317–338 (LNVLLGVLVAAVVSFLVAALIL) threads the bilayer. Residues 339-589 (HADKSTEDSL…YDKMAARMYK (251 aa)) lie on the Cytoplasmic side of the membrane. In terms of domain architecture, PTS EIIB type-2 spans 381–476 (EKIIFACDAG…SLTGASPIAE (96 aa)). Cysteine 387 acts as the Phosphocysteine intermediate; for EIIB activity in catalysis. Residue cysteine 387 is modified to Phosphocysteine; by EIIA.

Homodimer.

The protein localises to the cell membrane. The enzyme catalyses D-mannitol(out) + N(pros)-phospho-L-histidyl-[protein] = D-mannitol 1-phosphate(in) + L-histidyl-[protein]. In terms of biological role, the phosphoenolpyruvate-dependent sugar phosphotransferase system (sugar PTS), a major carbohydrate active transport system, catalyzes the phosphorylation of incoming sugar substrates concomitantly with their translocation across the cell membrane. The enzyme II CmtAB PTS system is involved in D-mannitol transport. This chain is PTS system mannitol-specific EIICB component (mtlA), found in Streptococcus pneumoniae serotype 4 (strain ATCC BAA-334 / TIGR4).